Reading from the N-terminus, the 907-residue chain is Probable dipeptidyl-aminopeptidase B (907 aa).

The segment covering 1–11 (MYDQVPYRDTD) has biased composition (basic and acidic residues). Positions 1–71 (MYDQVPYRDT…RGKPDEDDDL (71 aa)) are disordered. Residues 1–88 (MYDQVPYRDT…LKPMERKVRR (88 aa)) are Cytoplasmic-facing. Positions 22–36 (SDSNRSSIDTTSTTS) are enriched in low complexity. Residues 89–109 (AMYLLAFLMIGGWFLALAVYV) traverse the membrane as a helical; Signal-anchor for type II membrane protein segment. The Vacuolar portion of the chain corresponds to 110–907 (SREHFGTPDT…PLRKRNRELV (798 aa)). Residues Asn185 and Asn341 are each glycosylated (N-linked (GlcNAc...) asparagine). The active-site Charge relay system is Ser746. Asn800 is a glycosylation site (N-linked (GlcNAc...) asparagine). Residues Asp823 and His856 each act as charge relay system in the active site.

The protein belongs to the peptidase S9B family.

It is found in the vacuole membrane. The catalysed reaction is Release of an N-terminal dipeptide, Xaa-Yaa-|-Zaa-, from a polypeptide, preferentially when Yaa is Pro, provided Zaa is neither Pro nor hydroxyproline.. In terms of biological role, type IV dipeptidyl-peptidase which removes N-terminal dipeptides sequentially from polypeptides having unsubstituted N-termini provided that the penultimate residue is proline. This Tuber melanosporum (strain Mel28) (Perigord black truffle) protein is Probable dipeptidyl-aminopeptidase B (DAPB).